Reading from the N-terminus, the 281-residue chain is Phosphate import ATP-binding protein PstB 1 (281 aa).

A disordered region spans residues 1-34; it reads MTENTAETADESSDGGVTATTGAATTTPTTPPEP. Residues 15-28 are compositionally biased toward low complexity; sequence GGVTATTGAATTTP. Positions 36 to 276 constitute an ABC transporter domain; it reads IRARDLDVFY…PEHQRVEEYI (241 aa). ATP is bound at residue 68 to 75; it reads GPSGCGKS.

This sequence belongs to the ABC transporter superfamily. Phosphate importer (TC 3.A.1.7) family. The complex is composed of two ATP-binding proteins (PstB), two transmembrane proteins (PstC and PstA) and a solute-binding protein (PstS).

The protein localises to the cell membrane. It catalyses the reaction phosphate(out) + ATP + H2O = ADP + 2 phosphate(in) + H(+). Its function is as follows. Part of the ABC transporter complex PstSACB involved in phosphate import. Responsible for energy coupling to the transport system. The polypeptide is Phosphate import ATP-binding protein PstB 1 (Halobacterium salinarum (strain ATCC 700922 / JCM 11081 / NRC-1) (Halobacterium halobium)).